The primary structure comprises 159 residues: Putative ribosomal RNA large subunit methyltransferase H (159 aa).

Residues L76, G108, and 127 to 132 (FSKMTF) each bind S-adenosyl-L-methionine.

The protein belongs to the RNA methyltransferase RlmH family.

It localises to the cytoplasm. The catalysed reaction is pseudouridine(1915) in 23S rRNA + S-adenosyl-L-methionine = N(3)-methylpseudouridine(1915) in 23S rRNA + S-adenosyl-L-homocysteine + H(+). In terms of biological role, specifically methylates the pseudouridine at position 1915 (m3Psi1915) in 23S rRNA. In Methanococcus vannielii (strain ATCC 35089 / DSM 1224 / JCM 13029 / OCM 148 / SB), this protein is Putative ribosomal RNA large subunit methyltransferase H.